The following is a 605-amino-acid chain: Isocitrate dehydrogenase kinase/phosphatase (605 aa).

Residues 353–359 (APGFKGT) and Lys-374 contribute to the ATP site. Asp-413 is an active-site residue.

The protein belongs to the AceK family.

The protein localises to the cytoplasm. It carries out the reaction L-seryl-[isocitrate dehydrogenase] + ATP = O-phospho-L-seryl-[isocitrate dehydrogenase] + ADP + H(+). Functionally, bifunctional enzyme which can phosphorylate or dephosphorylate isocitrate dehydrogenase (IDH) on a specific serine residue. This is a regulatory mechanism which enables bacteria to bypass the Krebs cycle via the glyoxylate shunt in response to the source of carbon. When bacteria are grown on glucose, IDH is fully active and unphosphorylated, but when grown on acetate or ethanol, the activity of IDH declines drastically concomitant with its phosphorylation. This is Isocitrate dehydrogenase kinase/phosphatase from Rhodopseudomonas palustris (strain HaA2).